The sequence spans 315 residues: Ornithine carbamoyltransferase (315 aa).

Carbamoyl phosphate-binding positions include 57–60 (STRT), Gln-84, Arg-108, and 135–138 (HPCQ). L-ornithine is bound by residues Asn-166, Asp-230, and 234 to 235 (SM). Residues 270–271 (CL) and Arg-298 contribute to the carbamoyl phosphate site.

It belongs to the aspartate/ornithine carbamoyltransferase superfamily. OTCase family.

The protein resides in the cytoplasm. It catalyses the reaction carbamoyl phosphate + L-ornithine = L-citrulline + phosphate + H(+). It participates in amino-acid biosynthesis; L-arginine biosynthesis; L-arginine from L-ornithine and carbamoyl phosphate: step 1/3. In terms of biological role, reversibly catalyzes the transfer of the carbamoyl group from carbamoyl phosphate (CP) to the N(epsilon) atom of ornithine (ORN) to produce L-citrulline. The protein is Ornithine carbamoyltransferase of Thermococcus kodakarensis (strain ATCC BAA-918 / JCM 12380 / KOD1) (Pyrococcus kodakaraensis (strain KOD1)).